A 225-amino-acid polypeptide reads, in one-letter code: Ribulose-phosphate 3-epimerase (225 aa).

Serine 9 serves as a coordination point for substrate. A divalent metal cation is bound by residues histidine 34, aspartate 36, and histidine 68. Aspartate 36 serves as the catalytic Proton acceptor. Substrate is bound by residues histidine 68, 144-147 (GFGG), 177-179 (DGG), and 199-200 (GS). Aspartate 177 serves as a coordination point for a divalent metal cation. Aspartate 177 serves as the catalytic Proton donor.

It belongs to the ribulose-phosphate 3-epimerase family. The cofactor is a divalent metal cation.

It catalyses the reaction D-ribulose 5-phosphate = D-xylulose 5-phosphate. The protein operates within carbohydrate degradation. Functionally, catalyzes the reversible epimerization of D-ribulose 5-phosphate to D-xylulose 5-phosphate. The polypeptide is Ribulose-phosphate 3-epimerase (Escherichia coli O157:H7).